The sequence spans 174 residues: Shikimate kinase 2 (174 aa).

ATP is bound at residue 12 to 17 (GCGKTT). Residues T16 and D32 each coordinate Mg(2+). Residues D34, R58, and G79 each contribute to the substrate site. The segment at 112-126 (EAYPLADQRPTLTGR) is LID domain. R120 is a binding site for ATP. R139 is a substrate binding site. Q155 provides a ligand contact to ATP.

This sequence belongs to the shikimate kinase family. AroL subfamily. As to quaternary structure, monomer. Mg(2+) serves as cofactor.

The protein localises to the cytoplasm. The catalysed reaction is shikimate + ATP = 3-phosphoshikimate + ADP + H(+). The protein operates within metabolic intermediate biosynthesis; chorismate biosynthesis; chorismate from D-erythrose 4-phosphate and phosphoenolpyruvate: step 5/7. Its function is as follows. Catalyzes the specific phosphorylation of the 3-hydroxyl group of shikimic acid using ATP as a cosubstrate. The polypeptide is Shikimate kinase 2 (Erwinia tasmaniensis (strain DSM 17950 / CFBP 7177 / CIP 109463 / NCPPB 4357 / Et1/99)).